The sequence spans 257 residues: UPF0246 protein Shewmr4_2963 (257 aa).

Belongs to the UPF0246 family.

This chain is UPF0246 protein Shewmr4_2963, found in Shewanella sp. (strain MR-4).